Here is a 758-residue protein sequence, read N- to C-terminus: 5-methyltetrahydropteroyltriglutamate--homocysteine methyltransferase (758 aa).

5-methyltetrahydropteroyltri-L-glutamate is bound by residues 17–20 (RELK) and Lys117. L-homocysteine contacts are provided by residues 434–436 (IGS) and Glu487. L-methionine is bound by residues 434 to 436 (IGS) and Glu487. Residues 518–519 (RC) and Trp564 contribute to the 5-methyltetrahydropteroyltri-L-glutamate site. Asp602 contributes to the L-homocysteine binding site. Residue Asp602 coordinates L-methionine. Residue Glu608 participates in 5-methyltetrahydropteroyltri-L-glutamate binding. The Zn(2+) site is built by His644, Cys646, and Glu668. The Proton donor role is filled by His697. Cys729 contacts Zn(2+).

This sequence belongs to the vitamin-B12 independent methionine synthase family. It depends on Zn(2+) as a cofactor.

The enzyme catalyses 5-methyltetrahydropteroyltri-L-glutamate + L-homocysteine = tetrahydropteroyltri-L-glutamate + L-methionine. It functions in the pathway amino-acid biosynthesis; L-methionine biosynthesis via de novo pathway; L-methionine from L-homocysteine (MetE route): step 1/1. Catalyzes the transfer of a methyl group from 5-methyltetrahydrofolate to homocysteine resulting in methionine formation. This Serratia proteamaculans (strain 568) protein is 5-methyltetrahydropteroyltriglutamate--homocysteine methyltransferase.